Here is a 185-residue protein sequence, read N- to C-terminus: Photosystem I assembly protein Ycf4 (185 aa).

2 consecutive transmembrane segments (helical) span residues 22–42 and 57–77; these read FFFASILFGGALGFFLVGFSS and IIFVPQGIVMCFYGIAGLFFS.

Belongs to the Ycf4 family.

It localises to the plastid. It is found in the chloroplast thylakoid membrane. Functionally, seems to be required for the assembly of the photosystem I complex. This Welwitschia mirabilis (Tree tumbo) protein is Photosystem I assembly protein Ycf4.